The sequence spans 107 residues: Integration host factor subunit beta (107 aa).

The tract at residues 76–107 (FVPHFKPGKELRERVDGRAGEPLKADDPDDDR) is disordered. Residues 82 to 101 (PGKELRERVDGRAGEPLKAD) are compositionally biased toward basic and acidic residues.

The protein belongs to the bacterial histone-like protein family. Heterodimer of an alpha and a beta chain.

Its function is as follows. This protein is one of the two subunits of integration host factor, a specific DNA-binding protein that functions in genetic recombination as well as in transcriptional and translational control. The sequence is that of Integration host factor subunit beta from Burkholderia cenocepacia (strain HI2424).